The following is a 474-amino-acid chain: Crocetin glucosyltransferase, chloroplastic (474 aa).

Residues 1–45 constitute a chloroplast transit peptide; the sequence is MVQQRHVLLITYPAQGHINPALQFAQRLLRMGIQVTLATSVYALS. Catalysis depends on His17, which acts as the Proton acceptor. Position 17 (His17) interacts with an anthocyanidin. The UDP-alpha-D-glucose site is built by Gln346, His361, Trp364, Asn365, Ser366, Glu369, Asp385, and Gln386.

Belongs to the UDP-glycosyltransferase family. As to expression, ubiquitous.

It localises to the plastid. It is found in the chloroplast. The catalysed reaction is crocetin + UDP-alpha-D-glucose = beta-D-glucosyl crocetin + UDP. It catalyses the reaction beta-D-glucosyl crocetin + UDP-alpha-D-glucose = bis(beta-D-glucosyl) crocetin + UDP. It carries out the reaction beta-D-gentiobiosyl crocetin + UDP-alpha-D-glucose = beta-D-gentiobiosyl beta-D-glucosyl crocetin + UDP. In terms of biological role, glucosyltransferase acting on a broad range of substrates, including crocetin, 4-coumaric acid, caffeic acid and ferulic acid. No activity with indol-3-acetic acid, bixin and norbixin, and no formation of O-glucosides. Involved with UGT94E5 in sequential glycosylation of crocetin to crocin (bis(beta-D-gentiobiosyl) crocetin). The polypeptide is Crocetin glucosyltransferase, chloroplastic (UGT75L6) (Gardenia jasminoides (Cape jasmine)).